The chain runs to 1288 residues: Probable serine/threonine-protein kinase drkD (1288 aa).

Residues 1-12 show a composition bias toward polar residues; it reads MEGSFQFNKSKQ. Disordered stretches follow at residues 1 to 132, 156 to 223, and 269 to 386; these read MEGS…QYHP, FNVS…PEEI, and SFGH…DDEE. Low complexity-rich tracts occupy residues 13-79 and 156-220; these read TNNN…NSTS and FNVS…QQQP. Residues 221 to 248 are a coiled coil; it reads EEIEGELNRERQERDKMLHEEAEIEQYK. Residues 271-291 are compositionally biased toward polar residues; the sequence is GHITSANSDETTNNESGSPIN. The span at 302-343 shows a compositional bias: basic and acidic residues; that stretch reads PHSSHNEDHQSDQDNHGQFMNDEHQSTDDDQNKSDNEKESES. Positions 344 to 354 are enriched in polar residues; it reads ARNSGDLQQKV. Acidic residues predominate over residues 376 to 386; it reads EGEEEDDDDEE. 7 LRR repeats span residues 400-421, 423-444, 446-468, 469-490, 492-513, 517-538, and 540-561; these read KSTKLSLSNCWLKVIPTDVWSI, ELRDLDLSANQLKKVSKSIGLL, HLKRLRLNHNQLTALPKELYSLP, RLTTLYLNNNNFKVVPKEINRL, SLKTLDLSFNQITDISPQTNLH, NLVELRLRYNQLSSLPQNMLES, and HLQVLWLEGNRLPLNKAILKKS. 3 disordered regions span residues 690–717, 733–764, and 796–825; these read WDQQQQQQQQQSPNVSTPPISTSPVLTG, PTQQINNPPSPVTQFNQASPQHNNNQQQQQQQ, and QQQQQQNGSPQQPHVNNNNNNNIQQNKDHQ. Polar residues-rich tracts occupy residues 701 to 717 and 733 to 757; these read SPNVSTPPISTSPVLTG and PTQQINNPPSPVTQFNQASPQHNNN. The Protein kinase domain occupies 851–1104; the sequence is IAIGARIGRG…EILPIMEGMI (254 aa). ATP is bound by residues 857-865 and K878; that span reads IGRGGYGQV. Catalysis depends on D974, which acts as the Proton acceptor. 2 disordered regions span residues 1118–1141 and 1245–1288; these read GRPIPYVGPPEKDPSNKQPPQNMA and QQQL…NDKK. Positions 1257-1268 are enriched in low complexity; the sequence is NRLNYNFNNSNN. Polar residues predominate over residues 1269-1282; sequence SDIQPMQQENNYRM.

This sequence belongs to the protein kinase superfamily. TKL Ser/Thr protein kinase family.

The enzyme catalyses L-seryl-[protein] + ATP = O-phospho-L-seryl-[protein] + ADP + H(+). It carries out the reaction L-threonyl-[protein] + ATP = O-phospho-L-threonyl-[protein] + ADP + H(+). This is Probable serine/threonine-protein kinase drkD (drkD) from Dictyostelium discoideum (Social amoeba).